A 176-amino-acid chain; its full sequence is Superoxide oxidase CybB (176 aa).

Topologically, residues 1-7 (MENKYSR) are cytoplasmic. A helical membrane pass occupies residues 8-29 (LQISIHWLVFLLVIAAYCAMEF). His-13 serves as a coordination point for heme b. The Periplasmic segment spans residues 30 to 39 (RGFFPRSDRP). The chain crosses the membrane as a helical span at residues 40–64 (LINMIHVSCGISILVLMVVRLLLRL). Residue His-45 participates in heme b binding. Over 65–77 (KYPTPPIIPKPKP) the chain is Cytoplasmic. Residues 78–103 (MMTGLAHLGHLVIYLLFIALPVIGLV) traverse the membrane as a helical segment. Residues 104 to 135 (MMYNRGNPWFAFGLTMPYASEANFERVDSLKS) are Periplasmic-facing. Residues 136–158 (WHETLANLGYFVIGLHAAAALAH) form a helical membrane-spanning segment. Residues His-137 and His-151 each coordinate heme b. The Cytoplasmic portion of the chain corresponds to 159 to 176 (HYFWKDNTLLRMMPRKRS).

Belongs to the cytochrome b561 family. Monomer. Heme b is required as a cofactor.

Its subcellular location is the cell inner membrane. The enzyme catalyses a ubiquinol + 2 O2 = 2 superoxide + a ubiquinone + 2 H(+). It catalyses the reaction a menaquinol + 2 O2 = 2 superoxide + a menaquinone + 2 H(+). Its activity is regulated as follows. Quinone binding to the enzyme accelerates the reaction with superoxide. Its function is as follows. B-type di-heme cytochrome. Catalyzes the oxidation of superoxide to molecular oxygen and transfers the extracted electrons to ubiquinone through the two hemes. Can also use menaquinone. The enzyme may be responsible for the detoxification of the superoxide anion produced in the membrane or at its surface. However, it can also efficiently catalyze the formation of superoxide from ubiquinol under physiological conditions. This is Superoxide oxidase CybB from Escherichia coli (strain K12).